Here is a 65-residue protein sequence, read N- to C-terminus: UPF0434 protein HSM_0997 (65 aa).

This sequence belongs to the UPF0434 family.

This chain is UPF0434 protein HSM_0997, found in Histophilus somni (strain 2336) (Haemophilus somnus).